A 485-amino-acid polypeptide reads, in one-letter code: MSQVSRRKVLFVTSELADLVKTGGLGDVSAALPRAMRHLHDVRVLIPGYPQVINSGNPIHIISQLGGHAALPPCKVGRMDMKDGLVIYVLICPELYEREGTPYADSDGRDWSDNHIRFARLGLAAAEFAAGEVKSQWCPELVHAHDWPAGLAPAYMRWRGQSTPSIFTIHNLAYQGTVSTASSRELGIPDEAITPEGMEFYGKLSFIKAGMAFASHITTVSATYAREITTPEFGCGLEGFLQSKANKGQLSGIPNGIDESWDAATDEHLICHFAPNEWTRKEINADYVRELFELDASTGPLYAVVSRLVYQKGLDLTIGVAEHIVNNGGQIAIIGRGEPEEEDAMRELAARFPGRIGVRIGFNETDARRMFAGSDFLLMPSRYEPCGLSQMYAQRFGSLPVARNTGGLADTIEDGVTGFLFKESTIESYTEALNRTFQVFAHRELLNAMRCRAMAAPFNWHQAVEPYADLYRDLLKKNVSISSNY.

Residue Lys21 participates in ADP-alpha-D-glucose binding.

This sequence belongs to the glycosyltransferase 1 family. Bacterial/plant glycogen synthase subfamily.

It catalyses the reaction [(1-&gt;4)-alpha-D-glucosyl](n) + ADP-alpha-D-glucose = [(1-&gt;4)-alpha-D-glucosyl](n+1) + ADP + H(+). Its pathway is glycan biosynthesis; glycogen biosynthesis. Functionally, synthesizes alpha-1,4-glucan chains using ADP-glucose. The chain is Glycogen synthase from Pseudomonas savastanoi pv. phaseolicola (strain 1448A / Race 6) (Pseudomonas syringae pv. phaseolicola (strain 1448A / Race 6)).